The following is a 267-amino-acid chain: Orotidine 5'-phosphate decarboxylase (267 aa).

Substrate contacts are provided by residues aspartate 40, 62 to 64 (KTH), 93 to 102 (DRKFADIGNT), tyrosine 215, and arginine 234. The Proton donor role is filled by lysine 95.

This sequence belongs to the OMP decarboxylase family.

The catalysed reaction is orotidine 5'-phosphate + H(+) = UMP + CO2. The protein operates within pyrimidine metabolism; UMP biosynthesis via de novo pathway; UMP from orotate: step 2/2. This chain is Orotidine 5'-phosphate decarboxylase (pyrG), found in Phycomyces blakesleeanus (strain ATCC 8743b / DSM 1359 / FGSC 10004 / NBRC 33097 / NRRL 1555).